A 185-amino-acid polypeptide reads, in one-letter code: Ribosome-recycling factor (185 aa).

It belongs to the RRF family.

The protein resides in the cytoplasm. Functionally, responsible for the release of ribosomes from messenger RNA at the termination of protein biosynthesis. May increase the efficiency of translation by recycling ribosomes from one round of translation to another. In Clostridium kluyveri (strain NBRC 12016), this protein is Ribosome-recycling factor.